The primary structure comprises 544 residues: Chaperonin GroEL (544 aa).

ATP-binding positions include 30–33 (TLGP), Lys-51, 87–91 (DGTTT), Gly-415, and Asp-495.

This sequence belongs to the chaperonin (HSP60) family. Forms a cylinder of 14 subunits composed of two heptameric rings stacked back-to-back. Interacts with the co-chaperonin GroES.

The protein localises to the cytoplasm. The catalysed reaction is ATP + H2O + a folded polypeptide = ADP + phosphate + an unfolded polypeptide.. Functionally, together with its co-chaperonin GroES, plays an essential role in assisting protein folding. The GroEL-GroES system forms a nano-cage that allows encapsulation of the non-native substrate proteins and provides a physical environment optimized to promote and accelerate protein folding. This is Chaperonin GroEL from Aeromonas salmonicida.